We begin with the raw amino-acid sequence, 129 residues long: Profilin-4 (129 aa).

The protein belongs to the profilin family. Expressed in testis, in seminiferous tubules (at protein level). Expressed in spermatocytes and spermatids, but not in spermatogonium.

The protein resides in the cytoplasm. In terms of biological role, involved in male fertility. Required for manchette development and acrosome biogenesis during spermiogenesis. Binds in vitro to phospholipids, including phosphatidylinositol 3-phosphate (PtdIns(3)P), phosphatidylinositol 4,5-bisphosphate (PtdIns(4,5)P2), phosphatidylinositol 4-phosphate (PtdIns(4)P) and phosphatidic acid (PA). Contrary to other profilin family members, does not bind to actin in vitro. The polypeptide is Profilin-4 (Pfn4) (Rattus norvegicus (Rat)).